The chain runs to 157 residues: MSGFLEGLRCSECIDWGEKRNTIASIAAGVLFFTGWWIIIDAAVIYPTMKDFNHSYHACGVIATIAFLMINAVSNGQVRGDSYSEGCLGQTGARIWLFVGFMLAFGSLIASMWILFGGYVAKEKDIVYPGIAVFFQNAFIFFGGLVFKFGRTEDLWQ.

Residue Ser-2 is modified to N-acetylserine. Ser-2 is modified (phosphoserine). 4 consecutive transmembrane segments (helical) span residues 26 to 46, 58 to 78, 95 to 115, and 126 to 146; these read IAAG…AVIY, ACGV…NGQV, IWLF…MWIL, and IVYP…GGLV.

Belongs to the UPF0220 family.

Its subcellular location is the membrane. This is Transmembrane protein 50A (TMEM50A) from Homo sapiens (Human).